A 750-amino-acid chain; its full sequence is MEGPEIQFSEAIIDNGRFGKRVIRFETGRLAKQAAGASMVYIDEDTALLSATTAGKQPREGFDFFPLTVDVEERMYAAGRIPGSFFRREGRPSTEAILACRLMDRPLRPAFVKGLRNEVQIVVTVLAINPDELYDVVAINASSMSTQLSGLPFSGPIGGVRVALIADEQGSQWVAFPKHSQLENAVFNMVVAGRIAGDDVAIMMVEAEATDNSWNLIKEQGATAPTEEVVSEGLEAAKPFIKALCEAQADLAARAAKPTVEFPVFLDYQDDVYAAVEAAAADKLAAVFQIADKQDRDNASDELKDEVLGALAGQFEGREKELSAAFRSVTKHVVRQRILKDQVRIDGRGLTDIRQLTAEVEVLPRVHGSAIFERGETQIMGVTTLNMLKMEQQIDSLSPVTRKRYMHNYNFPPYSTGETGRVGSPKRREIGHGALAERALVPVLPTREEFPYAIRQVSEALGSNGSTSMGSVCASTLSMLNAGVPLKAAVAGIAMGLVSDQVDGQTRYAALTDILGAEDAFGDMDFKVAGTSEFVTAIQLDTKLDGIPASVLAAALKQAREARLHILEVINAAIDTPDELSEFAPRVIAVKIPVDKIGEVIGPKGKMINQIQEDTGADISIEDDGTVYIGATNGPSADAARSAINAIANPQVPEIGERYLGTVVKTTTFGAFVSLTPGKDGLLHISELRKLANGKRVDNVDDVVSVGQKVQVEITKIDDRGKLSLSPVVAEEEGAASEDAPAEAAEESAE.

Mg(2+) contacts are provided by aspartate 519 and aspartate 525. Residues 585–644 (PRVIAVKIPVDKIGEVIGPKGKMINQIQEDTGADISIEDDGTVYIGATNGPSADAARSAI) enclose the KH domain. One can recognise an S1 motif domain in the interval 656–728 (GERYLGTVVK…DRGKLSLSPV (73 aa)). The disordered stretch occupies residues 725 to 750 (LSPVVAEEEGAASEDAPAEAAEESAE). Over residues 730-750 (AEEEGAASEDAPAEAAEESAE) the composition is skewed to acidic residues.

It belongs to the polyribonucleotide nucleotidyltransferase family. Mg(2+) is required as a cofactor.

The protein localises to the cytoplasm. The catalysed reaction is RNA(n+1) + phosphate = RNA(n) + a ribonucleoside 5'-diphosphate. Its function is as follows. Involved in mRNA degradation. Catalyzes the phosphorolysis of single-stranded polyribonucleotides processively in the 3'- to 5'-direction. This Paenarthrobacter aurescens (strain TC1) protein is Polyribonucleotide nucleotidyltransferase.